A 668-amino-acid chain; its full sequence is MARPAAVRVLWALLLPLLLGSARGLRNASQRTFTIDYSHNRFLKDGQPFRYISGSIHYSRVPRFYWKDRLLKMKMAGLNAIQTYVPWNFHEPQPGQYQFSGEQDVEYFIKLAHELGLLVILRPGPYICAEWDMGGLPAWLLLKESIILRSSDPDYLAAVDKWLGVLLPKMKPLLYQNGGPIITMQVENEYGSYFTCDYDYLRFLQKLFHHHLGNDVLLFTTDGANEKFLQCGALQGLYATVDFGPGANITAAFQIQRKSEPKGPLVNSEFYTGWLDHWGQPHSTVRTEVVASSLHDILAHGANVNLYMFIGGTNFAYWNGANMPYQAQPTSYDYDAPLSEAGDLTEKYFALREVIRKFEKVPEGFIPPSTPKFAYGKVALKKLKTVEEALNVLCPPGPINSLYPLTFIQVKQYFGFVMYRTTLPQDCSDPTPLSSPLSGVHDRAYVSVDGVPQGVMERSNVITLNITGKAGATLDLLVENMGRVNYGRYINDFKGLISNLTLGSSILTNWMIFPLNTEDAVRSHLGGWHGPNNGRHDKTFAHRSSNYTLPAFYMGNFSIPSGIPDLPQDTFIQFPGWTKGQVWINGFNLGRYWPARGPQMTLFVPRHILVTSTPNTIMVLELEHAPCGDSGPEVCTVEFVDRPVIGAPPTPGHPPPDLSHRDLRLDYV.

The signal sequence occupies residues 1 to 24 (MARPAAVRVLWALLLPLLLGSARG). Residues 25–29 (LRNAS) constitute a propeptide that is removed on maturation. Substrate is bound by residues Tyr84, Glu130, and Asn188. Glu189 serves as the catalytic Proton donor. The cysteines at positions 196 and 231 are disulfide-linked. Asn248 carries N-linked (GlcNAc...) asparagine glycosylation. The active-site Nucleophile is Glu269. Tyr334 is a substrate binding site. Residues Asn465, Asn499, Asn546, and Asn556 are each glycosylated (N-linked (GlcNAc...) asparagine). A disulfide bridge links Cys627 with Cys635.

It belongs to the glycosyl hydrolase 35 family. Homodimer. May form higher multimers.

The protein localises to the lysosome. It carries out the reaction Hydrolysis of terminal non-reducing beta-D-galactose residues in beta-D-galactosides.. Cleaves beta-linked terminal galactosyl residues from gangliosides, glycoproteins, and glycosaminoglycans. The chain is Beta-galactosidase (GLB1) from Canis lupus familiaris (Dog).